A 256-amino-acid chain; its full sequence is uncharacterized protein (256 aa).

2 consecutive transmembrane segments (helical) span residues 155–175 (ITGM…GLWL) and 203–223 (ITTT…YLLI).

It is found in the cell membrane. This is an uncharacterized protein from Mycobacterium bovis (strain ATCC BAA-935 / AF2122/97).